The chain runs to 279 residues: Zinc-finger homeodomain protein 1 (279 aa).

Residues 1–30 (MEFEDNNNNNDEEQEEDMNLHEEEEDDDAV) are compositionally biased toward acidic residues. Residues 1–62 (MEFEDNNNNN…TTSTGGGGGF (62 aa)) are disordered. The segment at 75 to 124 (FRECLKNQAVNIGGHAVDGCGEFMPAGIEGTIDALKCAACGCHRNFHRKE) adopts a ZF-HD dimerization-type zinc-finger fold. Disordered stretches follow at residues 128–199 (FHHA…TKFT) and 245–279 (NNKH…QDQP). Over residues 134-143 (QHQPPPPPPG) the composition is skewed to pro residues. Positions 191-254 (RKRHRTKFTA…NNKHTLGKSP (64 aa)) form a DNA-binding region, homeobox; atypical.

In terms of assembly, homo- and heterodimer with other ZFHD proteins. Interacts with MIF1 and MIF2; these interactions prevent nuclear localization and DNA-binding to inhibit transcription regulation activity. Binds to ZHD2, ZHD3, ZHD4, ZHD5, ZHD6, ZHD7, ZHD8, ZHD9, ZHD10 and ZHD11. Mostly expressed in flowers and inflorescence.

The protein resides in the nucleus. Functionally, putative transcription factor. The sequence is that of Zinc-finger homeodomain protein 1 (ZHD1) from Arabidopsis thaliana (Mouse-ear cress).